The sequence spans 272 residues: Serine/arginine-rich splicing factor 5 (272 aa).

One can recognise an RRM 1 domain in the interval 4 to 74 (CRVFIGRLNP…ERVTIEHARA (71 aa)). Residues 73 to 105 (RARSRGGRGRGRYSDRFSSRRPRNDRRNAPPVR) form a disordered region. Positions 74–83 (ARSRGGRGRG) are enriched in basic residues. Phosphoserine is present on S86. Residues 108 to 181 (NRLIVENLSS…RKIKLIEGSK (74 aa)) form the RRM 2 domain. An N6-acetyllysine modification is found at K167. A disordered region spans residues 174-272 (IKLIEGSKRH…SRSRSVDSGN (99 aa)). Residues 182-229 (RHSRSRSRSRSRTRSSSRSRSRSRSRSRKSYSRSRSRSRSRSRSKSRS) show a composition bias toward basic residues. Phosphoserine occurs at positions 227, 229, 233, 250, and 253. The segment covering 242-254 (RGSSSRSKSPASV) has biased composition (low complexity).

The protein belongs to the splicing factor SR family. Interacts (via RS domain) with PHF5A (via N-terminus). Found in a pre-mRNA splicing complex with SRSF4/SFRS4, SRSF5/SFRS5, SNRNP70, SNRPA1, SRRM1 and SRRM2. Post-translationally, extensively phosphorylated on serine residues in the RS domain.

The protein resides in the nucleus. Plays a role in constitutive splicing and can modulate the selection of alternative splice sites. This is Serine/arginine-rich splicing factor 5 (SRSF5) from Homo sapiens (Human).